Consider the following 308-residue polypeptide: Dioxygenase peniF (308 aa).

Fe cation is bound by residues histidine 144 and histidine 225.

The protein belongs to the PhyH family. In terms of assembly, homodimer. Fe cation is required as a cofactor.

Functionally, dioxygenase; part of the gene cluster that mediates the biosynthesis of penifulvin A, a potent insecticidal sesquiterpene that features a [5.5.5.6]dioxafenestrane ring. The first step of the pathway is performed by the sesquiterpene cyclase peniA that generates the angular triquinane scaffold silphinene via cyclization of the linear farnesyl pyrophosphate (FPP). The cytochrome P450 monooxygenase peniB and the flavin-dependent monooxygenase peniC then catalyze a series of oxidation reactions to transform silphinene into penifulvin A. The dioxygenases peniD and peniF, as well as the acetyltransferase peniE, do not seem to be involved in the biosynthesis of penifulvin A. This Penicillium patulum (Penicillium griseofulvum) protein is Dioxygenase peniF.